Consider the following 91-residue polypeptide: Probable Fe(2+)-trafficking protein (91 aa).

It belongs to the Fe(2+)-trafficking protein family. As to quaternary structure, monomer.

Could be a mediator in iron transactions between iron acquisition and iron-requiring processes, such as synthesis and/or repair of Fe-S clusters in biosynthetic enzymes. This is Probable Fe(2+)-trafficking protein from Citrobacter koseri (strain ATCC BAA-895 / CDC 4225-83 / SGSC4696).